A 563-amino-acid chain; its full sequence is BOS complex subunit NCLN (563 aa).

The first 42 residues, 1–42, serve as a signal peptide directing secretion; that stretch reads MLEEAGEVLENMLKASCLPLGFIVFLPAVLLLVAPPLPAADA. Residues 43-522 lie on the Lumenal side of the membrane; sequence AHEFTVYRMQ…VMNAYRVKPA (480 aa). Residues N241 and N428 are each glycosylated (N-linked (GlcNAc...) asparagine). Residues 523–543 traverse the membrane as a helical segment; the sequence is VFDLLLAVGIAAYLGMAYVAV. At 544–563 the chain is on the cytoplasmic side; that stretch reads QHFSLLYKTVQRLLVKAKTQ.

It belongs to the nicastrin family. As to quaternary structure, component of the back of Sec61 (BOS) complex, composed of NCLN/Nicalin, NOMO (NOMO1, NOMO2 or NOMO3) and TMEM147. The BOS complex is part of the multi-pass translocon (MPT) complex, composed of three subcomplexes, the GEL complex (composed of RAB5IF/OPTI and TMCO1), the BOS complex (composed of NCLN/Nicalin, NOMO and TMEM147) and the PAT complex (composed of WDR83OS/Asterix and CCDC47). The MPT complex associates with the SEC61 complex. As to expression, highly expressed in pancreas and skeletal muscle and, at lower levels, in heart.

The protein resides in the endoplasmic reticulum membrane. Component of the multi-pass translocon (MPT) complex that mediates insertion of multi-pass membrane proteins into the lipid bilayer of membranes. The MPT complex takes over after the SEC61 complex: following membrane insertion of the first few transmembrane segments of proteins by the SEC61 complex, the MPT complex occludes the lateral gate of the SEC61 complex to promote insertion of subsequent transmembrane regions. May antagonize Nodal signaling and subsequent organization of axial structures during mesodermal patterning, via its interaction with NOMO. In Homo sapiens (Human), this protein is BOS complex subunit NCLN.